Consider the following 146-residue polypeptide: 3-hydroxyacyl-[acyl-carrier-protein] dehydratase FabZ (146 aa).

Residue His48 is part of the active site.

This sequence belongs to the thioester dehydratase family. FabZ subfamily.

The protein localises to the cytoplasm. It carries out the reaction a (3R)-hydroxyacyl-[ACP] = a (2E)-enoyl-[ACP] + H2O. Functionally, involved in unsaturated fatty acids biosynthesis. Catalyzes the dehydration of short chain beta-hydroxyacyl-ACPs and long chain saturated and unsaturated beta-hydroxyacyl-ACPs. In Paracidovorax citrulli (strain AAC00-1) (Acidovorax citrulli), this protein is 3-hydroxyacyl-[acyl-carrier-protein] dehydratase FabZ.